Consider the following 2144-residue polypeptide: Alpha-protein kinase 2 (2144 aa).

An Ig-like 1 domain is found at 7–105; it reads PERRTLCFLS…ICCSASLEVQ (99 aa). Cys33 and Cys98 are oxidised to a cystine. 11 disordered regions span residues 425-473, 500-575, 727-775, 845-864, 881-907, 1011-1065, 1316-1340, 1471-1509, 1565-1587, 1629-1696, and 1720-1754; these read ETAK…LQTM, SLAR…GAPG, EDNE…NVGS, QTQG…DGKS, EASE…TLPY, SCEA…PEGQ, DPVE…EMEM, GPGE…ETEV, CGNH…PKGN, ECES…GSGH, and ENSR…PCKA. Residues 500 to 511 show a composition bias toward basic and acidic residues; that stretch reads SLARERTDEKYP. Basic and acidic residues predominate over residues 853–864; that stretch reads RSTDKRSQDGKS. Residues 897–906 are compositionally biased toward polar residues; it reads PPSTFSSTLP. Residues 1574–1587 are compositionally biased toward polar residues; the sequence is DLTNTPCTSSPKGN. 2 stretches are compositionally biased toward basic and acidic residues: residues 1631–1645 and 1732–1754; these read ESEK…RDPC and PKFE…PCKA. An Ig-like 2 domain is found at 1759-1847; sequence PVLLKRIQAE…GKVTAEFNLT (89 aa). A disulfide bridge links Cys1781 with Cys1831. Residues 1874–2106 form the Alpha-type protein kinase domain; that stretch reads KEDVFNDSYF…YCKMLGLKSL (233 aa). Residues 2109-2144 are disordered; sequence NSQKPKKPIVGKGRVPTNATQVKTPESETPPAERKT.

This sequence belongs to the protein kinase superfamily. Alpha-type protein kinase family. ALPK subfamily.

The protein resides in the basolateral cell membrane. It catalyses the reaction L-seryl-[protein] + ATP = O-phospho-L-seryl-[protein] + ADP + H(+). The catalysed reaction is L-threonyl-[protein] + ATP = O-phospho-L-threonyl-[protein] + ADP + H(+). Protein kinase that recognizes phosphorylation sites in which the surrounding peptides have an alpha-helical conformation. Regulates cardiac development and cardiomyocyte differentiation by negatively regulating Wnt/beta-catenin signaling. In Mus musculus (Mouse), this protein is Alpha-protein kinase 2.